The primary structure comprises 410 residues: Lissencephaly-1 homolog (410 aa).

Positions 7 to 39 (QRDELNRAIADYLRSNGYEEAYSVFKKEAELDM) constitute a LisH domain. Positions 56 to 82 (TSVIRLQKKVMELESKLNEAKEEFTSG) form a coiled coil. 7 WD repeats span residues 106 to 147 (GHRS…RTLK), 148 to 187 (GHTDSVQDISFDHSGKLLASCSADMTIKLWDFQGFECIRT), 190 to 229 (GHDHNVSSVAIMPNGDHIVSASRDKTIKMWEVQTGYCVKT), 232 to 271 (GHREWVRMVRPNQDGTLIASCSNDQTVRVWVVATKECKAE), 274 to 333 (EHEH…CLMT), 336 to 377 (GHDN…KTLN), and 379 to 410 (HEHFVTSLDFHKTAPYVVTGSVDQTVKVWECR).

Belongs to the WD repeat LIS1/nudF family. In terms of assembly, can self-associate. Component of the cytosolic PAF-AH (I) heterotetrameric enzyme, which is composed of PAFAH1B1 (beta), PAFAH1B2 (alpha2) and PAFAH1B3 (alpha1) subunits. The catalytic activity of the enzyme resides in the alpha1 (PAFAH1B3) and alpha2 (PAFAH1B2) subunits, whereas the beta subunit (PAFAH1B1) has regulatory activity. Trimer formation is not essential for the catalytic activity. Interacts with dynein, dynactin, nde1 and ndel1.

Its subcellular location is the cytoplasm. It localises to the cytoskeleton. It is found in the microtubule organizing center. The protein resides in the centrosome. Functionally, regulatory subunit (beta subunit) of the cytosolic type I platelet-activating factor (PAF) acetylhydrolase (PAF-AH (I)), an enzyme that catalyzes the hydrolyze of the acetyl group at the sn-2 position of PAF and its analogs and participates in the PAF inactivation. Positively regulates the activity of the minus-end directed microtubule motor protein dynein. May enhance dynein-mediated microtubule sliding by targeting dynein to the microtubule plus end. Required for several dynein- and microtubule-dependent processes such as the maintenance of Golgi integrity, the peripheral transport of microtubule fragments and the coupling of the nucleus and centrosome. May be required for proliferation of neuronal precursors and neuronal migration. This Xenopus tropicalis (Western clawed frog) protein is Lissencephaly-1 homolog (pafah1b1).